A 321-amino-acid polypeptide reads, in one-letter code: Genome polyprotein (321 aa).

The Cytoplasmic segment spans residues 1–52 (RNLGKVIDTLTCGFADLMGYIPLVGAPLGGAARALAHGVRVLEDGVNYATGN). Residues 6–57 (VIDTLTCGFADLMGYIPLVGAPLGGAARALAHGVRVLEDGVNYATGNLPGCS) form an interaction with APOA2 region. The important for lipid droplets localization stretch occupies residues 48 to 51 (YATG). Residues 53 to 73 (LPGCSFSLFLLALLSCLTVPA) form a helical membrane-spanning segment. A propeptide spans 62-75 (LLALLSCLTVPASA) (ER anchor for the core protein, removed in mature form by host signal peptidase). Residues 74 to 242 (SAYQVRNSTG…AGAHWGVLAG (169 aa)) lie on the Lumenal side of the membrane. 3 N-linked (GlcNAc...) asparagine; by host glycosylation sites follow: asparagine 80, asparagine 93, and asparagine 118. Residues 149–180 (LVGSATLCSALYVGDLCGSIFLVGQLFTFSPR) are important for fusion. Asparagine 189 carries an N-linked (GlcNAc...) asparagine; by host glycan. The helical transmembrane segment at 243-263 (IAYFSMVGNWAKVLVVLLLFA) threads the bilayer. Over 264–321 (GVDAETTVTGGSAAHGALGIASLFNQGARQNIQLINTNGSWHINSTALNCNDSLNTGW) the chain is Lumenal. Residues 268-294 (ETTVTGGSAAHGALGIASLFNQGARQN) form an HVR1 region. N-linked (GlcNAc...) (high mannose) asparagine; by host glycans are attached at residues asparagine 301, asparagine 307, and asparagine 314.

The protein belongs to the hepacivirus polyprotein family. In terms of assembly, homooligomer. Interacts with E1 (via C-terminus). Interacts with the non-structural protein 5A. Interacts (via N-terminus) with host STAT1 (via SH2 domain); this interaction results in decreased STAT1 phosphorylation and ubiquitin-mediated proteasome-dependent STAT1 degradation, leading to decreased IFN-stimulated gene transcription. Interacts with host STAT3; this interaction constitutively activates STAT3. Interacts with host LTBR receptor. Interacts with host TNFRSF1A receptor and possibly induces apoptosis. Interacts with host HNRPK. Interacts with host YWHAE. Interacts with host UBE3A/E6AP. Interacts with host DDX3X. Interacts with host APOA2. Interacts with host RXRA protein. Interacts with host SP110 isoform 3/Sp110b; this interaction sequesters the transcriptional corepressor SP110 away from the nucleus. Interacts with host CREB3 nuclear transcription protein; this interaction triggers cell transformation. Interacts with host ACY3. Interacts with host C1QR1. Interacts with host RBM24; this interaction, which enhances the interaction of the mature core protein with 5'-UTR, may inhibit viral translation and favor replication. Interacts with host EIF2AK2/PKR; this interaction induces the autophosphorylation of EIF2AK2. Part of the viral assembly initiation complex composed of NS2, E1, E2, NS3, NS4A, NS5A and the mature core protein. Forms a heterodimer with envelope glycoprotein E2. Interacts with mature core protein. Interacts with protease NS2. The heterodimer E1/E2 interacts with host CLDN1; this interaction plays a role in viral entry into host cell. Interacts with host SPSB2 (via C-terminus). Part of the viral assembly initiation complex composed of NS2, E1, E2, NS3, NS4A, NS5A and the mature core protein. As to quaternary structure, forms a heterodimer with envelope glycoprotein E1. Interacts with host CD81 and SCARB1 receptors; these interactions play a role in viral entry into host cell. Interacts with host EIF2AK2/PKR; this interaction inhibits EIF2AK2 and probably allows the virus to evade the innate immune response. Interacts with host CD209/DC-SIGN and CLEC4M/DC-SIGNR. Interact with host SPCS1; this interaction is essential for viral particle assembly. Interacts with protease NS2. The heterodimer E1/E2 interacts with host CLDN1; this interaction plays a role in viral entry into host cell. Part of the viral assembly initiation complex composed of NS2, E1, E2, NS3, NS4A, NS5A and the mature core protein. Post-translationally, specific enzymatic cleavages in vivo yield mature proteins. The structural proteins, core, E1, E2 and p7 are produced by proteolytic processing by host signal peptidases. The core protein precursor is synthesized as a 23 kDa, which is retained in the ER membrane through the hydrophobic signal peptide. Cleavage by the signal peptidase releases the 21 kDa mature core protein. The cleavage of the core protein precursor occurs between aminoacids 176 and 188 but the exact cleavage site is not known. Some degraded forms of the core protein appear as well during the course of infection. The other proteins (p7, NS2, NS3, NS4A, NS4B, NS5A and NS5B) are cleaved by the viral proteases. Autoprocessing between NS2 and NS3 is mediated by the NS2 cysteine protease catalytic domain and regulated by the NS3 N-terminal domain. In terms of processing, phosphorylated by host PKC and PKA. Ubiquitinated; mediated by UBE3A and leading to core protein subsequent proteasomal degradation. Post-translationally, highly N-glycosylated.

It localises to the host endoplasmic reticulum membrane. The protein localises to the host mitochondrion membrane. It is found in the virion. The protein resides in the host cytoplasm. Its subcellular location is the host nucleus. It localises to the host lipid droplet. The protein localises to the virion membrane. Packages viral RNA to form a viral nucleocapsid, and promotes virion budding. Participates in the viral particle production as a result of its interaction with the non-structural protein 5A. Binds RNA and may function as a RNA chaperone to induce the RNA structural rearrangements taking place during virus replication. Modulates viral translation initiation by interacting with viral IRES and 40S ribosomal subunit. Affects various cell signaling pathways, host immunity and lipid metabolism. Prevents the establishment of cellular antiviral state by blocking the interferon-alpha/beta (IFN-alpha/beta) and IFN-gamma signaling pathways and by blocking the formation of phosphorylated STAT1 and promoting ubiquitin-mediated proteasome-dependent degradation of STAT1. Activates STAT3 leading to cellular transformation. Regulates the activity of cellular genes, including c-myc and c-fos. May repress the promoter of p53, and sequester CREB3 and SP110 isoform 3/Sp110b in the cytoplasm. Represses cell cycle negative regulating factor CDKN1A, thereby interrupting an important check point of normal cell cycle regulation. Targets transcription factors involved in the regulation of inflammatory responses and in the immune response: suppresses TNF-induced NF-kappa-B activation, and activates AP-1. Binds to dendritic cells (DCs) via C1QR1, resulting in down-regulation of T-lymphocytes proliferation. Alters lipid metabolism by interacting with hepatocellular proteins involved in lipid accumulation and storage. Induces up-regulation of FAS promoter activity, and thereby contributes to the increased triglyceride accumulation in hepatocytes (steatosis). Functionally, forms a heterodimer with envelope glycoprotein E2, which mediates virus attachment to the host cell, virion internalization through clathrin-dependent endocytosis and fusion with host membrane. Fusion with the host cell is most likely mediated by both E1 and E2, through conformational rearrangements of the heterodimer required for fusion rather than a classical class II fusion mechanism. E1/E2 heterodimer binds host apolipoproteins such as APOB and ApoE thereby forming a lipo-viro-particle (LVP). APOE associated to the LVP allows the initial virus attachment to cell surface receptors such as the heparan sulfate proteoglycans (HSPGs), syndecan-1 (SDC1), syndecan-1 (SDC2), the low-density lipoprotein receptor (LDLR) and scavenger receptor class B type I (SCARB1). The cholesterol transfer activity of SCARB1 allows E2 exposure and binding of E2 to SCARB1 and the tetraspanin CD81. E1/E2 heterodimer binding on CD81 activates the epithelial growth factor receptor (EGFR) signaling pathway. Diffusion of the complex E1-E2-EGFR-SCARB1-CD81 to the cell lateral membrane allows further interaction with Claudin 1 (CLDN1) and occludin (OCLN) to finally trigger HCV entry. In terms of biological role, forms a heterodimer with envelope glycoprotein E1, which mediates virus attachment to the host cell, virion internalization through clathrin-dependent endocytosis and fusion with host membrane. Fusion with the host cell is most likely mediated by both E1 and E2, through conformational rearrangements of the heterodimer required for fusion rather than a classical class II fusion mechanism. The interaction between envelope glycoprotein E2 and host apolipoprotein E/APOE allows the proper assembly, maturation and infectivity of the viral particles. This interaction is probably promoted via the up-regulation of cellular autophagy by the virus. E1/E2 heterodimer binds host apolipoproteins such as APOB and APOE thereby forming a lipo-viro-particle (LVP). APOE associated to the LVP allows the initial virus attachment to cell surface receptors such as the heparan sulfate proteoglycans (HSPGs), syndecan-1 (SDC1), syndecan-1 (SDC2), the low-density lipoprotein receptor (LDLR) and scavenger receptor class B type I (SCARB1). The cholesterol transfer activity of SCARB1 allows E2 exposure and binding of E2 to SCARB1 and the tetraspanin CD81. E1/E2 heterodimer binding on CD81 activates the epithelial growth factor receptor (EGFR) signaling pathway. Diffusion of the complex E1-E2-EGFR-SCARB1-CD81 to the cell lateral membrane allows further interaction with Claudin 1 (CLDN1) and occludin (OCLN) to finally trigger HCV entry. Inhibits host EIF2AK2/PKR activation, preventing the establishment of an antiviral state. Viral ligand for CD209/DC-SIGN and CLEC4M/DC-SIGNR, which are respectively found on dendritic cells (DCs), and on liver sinusoidal endothelial cells and macrophage-like cells of lymph node sinuses. These interactions allow the capture of circulating HCV particles by these cells and subsequent facilitated transmission to permissive cells such as hepatocytes and lymphocyte subpopulations. The protein is Genome polyprotein of Homo sapiens (Human).